The sequence spans 151 residues: MAQTIYVLNGPNLNLLGTREPEIYGRATLADVEKLCAETAAGFGLVAVCRQSNHEGQLIDWIHQARSEKVAGLVINAGGYTHTSIALHDALVGVQIPTVEVHVSNVFAREDFRHHSFIAKAAFASLCGFGIDGYRLAITGLAAKLGASATA.

Catalysis depends on Tyr-24, which acts as the Proton acceptor. The substrate site is built by Asn-76, His-82, and Asp-89. His-102 serves as the catalytic Proton donor. Residues 103–104 (VS) and Arg-113 each bind substrate.

This sequence belongs to the type-II 3-dehydroquinase family. Homododecamer.

The catalysed reaction is 3-dehydroquinate = 3-dehydroshikimate + H2O. Its pathway is metabolic intermediate biosynthesis; chorismate biosynthesis; chorismate from D-erythrose 4-phosphate and phosphoenolpyruvate: step 3/7. Functionally, catalyzes a trans-dehydration via an enolate intermediate. This is 3-dehydroquinate dehydratase from Rhodopseudomonas palustris (strain TIE-1).